The chain runs to 369 residues: tRNA 2-selenouridine synthase (369 aa).

Residues Phe15–Glu138 form the Rhodanese domain. Catalysis depends on Cys98, which acts as the S-selanylcysteine intermediate.

The protein belongs to the SelU family. As to quaternary structure, monomer.

The enzyme catalyses 5-methylaminomethyl-2-thiouridine(34) in tRNA + selenophosphate + (2E)-geranyl diphosphate + H2O + H(+) = 5-methylaminomethyl-2-selenouridine(34) in tRNA + (2E)-thiogeraniol + phosphate + diphosphate. The catalysed reaction is 5-methylaminomethyl-2-thiouridine(34) in tRNA + (2E)-geranyl diphosphate = 5-methylaminomethyl-S-(2E)-geranyl-thiouridine(34) in tRNA + diphosphate. It carries out the reaction 5-methylaminomethyl-S-(2E)-geranyl-thiouridine(34) in tRNA + selenophosphate + H(+) = 5-methylaminomethyl-2-(Se-phospho)selenouridine(34) in tRNA + (2E)-thiogeraniol. It catalyses the reaction 5-methylaminomethyl-2-(Se-phospho)selenouridine(34) in tRNA + H2O = 5-methylaminomethyl-2-selenouridine(34) in tRNA + phosphate. Its function is as follows. Involved in the post-transcriptional modification of the uridine at the wobble position (U34) of tRNA(Lys), tRNA(Glu) and tRNA(Gln). Catalyzes the conversion of 2-thiouridine (S2U-RNA) to 2-selenouridine (Se2U-RNA). Acts in a two-step process involving geranylation of 2-thiouridine (S2U) to S-geranyl-2-thiouridine (geS2U) and subsequent selenation of the latter derivative to 2-selenouridine (Se2U) in the tRNA chain. This Shewanella sp. (strain W3-18-1) protein is tRNA 2-selenouridine synthase.